The following is a 121-amino-acid chain: Fluoride-specific ion channel FluC 1 (121 aa).

4 helical membrane passes run 3-23 (YLYI…LSML), 29-49 (IPLG…SIGA), 67-87 (TGLL…VTLF), and 92-112 (FILF…SCYL). Na(+)-binding residues include Gly71 and Thr74.

The protein belongs to the fluoride channel Fluc/FEX (TC 1.A.43) family.

The protein resides in the cell membrane. The enzyme catalyses fluoride(in) = fluoride(out). Na(+) is not transported, but it plays an essential structural role and its presence is essential for fluoride channel function. Its function is as follows. Fluoride-specific ion channel. Important for reducing fluoride concentration in the cell, thus reducing its toxicity. The polypeptide is Fluoride-specific ion channel FluC 1 (Staphylococcus epidermidis (strain ATCC 35984 / DSM 28319 / BCRC 17069 / CCUG 31568 / BM 3577 / RP62A)).